We begin with the raw amino-acid sequence, 197 residues long: Recombination protein RecR (197 aa).

The segment at 57–72 (CSVCFGITEDDPCRFC) adopts a C4-type zinc-finger fold. The Toprim domain occupies 79–174 (GAICVVEEPQ…RVTRLAHGIP (96 aa)).

It belongs to the RecR family.

Functionally, may play a role in DNA repair. It seems to be involved in an RecBC-independent recombinational process of DNA repair. It may act with RecF and RecO. This chain is Recombination protein RecR, found in Geobacter sulfurreducens (strain ATCC 51573 / DSM 12127 / PCA).